We begin with the raw amino-acid sequence, 82 residues long: Small ribosomal subunit protein bS18 (82 aa).

Belongs to the bacterial ribosomal protein bS18 family. As to quaternary structure, part of the 30S ribosomal subunit. Forms a tight heterodimer with protein bS6.

Functionally, binds as a heterodimer with protein bS6 to the central domain of the 16S rRNA, where it helps stabilize the platform of the 30S subunit. The polypeptide is Small ribosomal subunit protein bS18 (Chlamydia caviae (strain ATCC VR-813 / DSM 19441 / 03DC25 / GPIC) (Chlamydophila caviae)).